The sequence spans 183 residues: NAD(P)H-quinone oxidoreductase subunit J (183 aa).

The segment at 1-21 is disordered; the sequence is MAEENAQEKQAPPSAGEQSEP.

The protein belongs to the complex I 30 kDa subunit family. In terms of assembly, NDH-1 can be composed of about 15 different subunits; different subcomplexes with different compositions have been identified which probably have different functions.

It localises to the cellular thylakoid membrane. The enzyme catalyses a plastoquinone + NADH + (n+1) H(+)(in) = a plastoquinol + NAD(+) + n H(+)(out). The catalysed reaction is a plastoquinone + NADPH + (n+1) H(+)(in) = a plastoquinol + NADP(+) + n H(+)(out). Its function is as follows. NDH-1 shuttles electrons from an unknown electron donor, via FMN and iron-sulfur (Fe-S) centers, to quinones in the respiratory and/or the photosynthetic chain. The immediate electron acceptor for the enzyme in this species is believed to be plastoquinone. Couples the redox reaction to proton translocation, and thus conserves the redox energy in a proton gradient. Cyanobacterial NDH-1 also plays a role in inorganic carbon-concentration. The chain is NAD(P)H-quinone oxidoreductase subunit J from Synechococcus sp. (strain JA-2-3B'a(2-13)) (Cyanobacteria bacterium Yellowstone B-Prime).